Reading from the N-terminus, the 223-residue chain is Thiamine-phosphate synthase (223 aa).

Residues 47 to 51 (QLRDK) and asparagine 84 contribute to the 4-amino-2-methyl-5-(diphosphooxymethyl)pyrimidine site. Positions 85 and 104 each coordinate Mg(2+). Serine 123 lines the 4-amino-2-methyl-5-(diphosphooxymethyl)pyrimidine pocket. 150–152 (TPT) serves as a coordination point for 2-[(2R,5Z)-2-carboxy-4-methylthiazol-5(2H)-ylidene]ethyl phosphate. Lysine 153 is a binding site for 4-amino-2-methyl-5-(diphosphooxymethyl)pyrimidine. 2-[(2R,5Z)-2-carboxy-4-methylthiazol-5(2H)-ylidene]ethyl phosphate is bound at residue glycine 182.

Belongs to the thiamine-phosphate synthase family. Mg(2+) serves as cofactor.

The catalysed reaction is 2-[(2R,5Z)-2-carboxy-4-methylthiazol-5(2H)-ylidene]ethyl phosphate + 4-amino-2-methyl-5-(diphosphooxymethyl)pyrimidine + 2 H(+) = thiamine phosphate + CO2 + diphosphate. It carries out the reaction 2-(2-carboxy-4-methylthiazol-5-yl)ethyl phosphate + 4-amino-2-methyl-5-(diphosphooxymethyl)pyrimidine + 2 H(+) = thiamine phosphate + CO2 + diphosphate. It catalyses the reaction 4-methyl-5-(2-phosphooxyethyl)-thiazole + 4-amino-2-methyl-5-(diphosphooxymethyl)pyrimidine + H(+) = thiamine phosphate + diphosphate. Its pathway is cofactor biosynthesis; thiamine diphosphate biosynthesis; thiamine phosphate from 4-amino-2-methyl-5-diphosphomethylpyrimidine and 4-methyl-5-(2-phosphoethyl)-thiazole: step 1/1. Condenses 4-methyl-5-(beta-hydroxyethyl)thiazole monophosphate (THZ-P) and 2-methyl-4-amino-5-hydroxymethyl pyrimidine pyrophosphate (HMP-PP) to form thiamine monophosphate (TMP). This is Thiamine-phosphate synthase from Saccharopolyspora erythraea (strain ATCC 11635 / DSM 40517 / JCM 4748 / NBRC 13426 / NCIMB 8594 / NRRL 2338).